Reading from the N-terminus, the 1308-residue chain is Tau-tubulin kinase 1 (1308 aa).

The region spanning 34–297 is the Protein kinase domain; that stretch reads WKVLKKIGGG…LIMSVFENSM (264 aa). ATP is bound by residues 40–48 and lysine 63; that span reads IGGGGFGEI. Aspartate 154 serves as the catalytic Proton acceptor. Disordered regions lie at residues 364–397, 418–448, 474–671, 720–899, 985–1085, and 1097–1308; these read LSDQENAPPILPGRPPEGLGPGPHLVPHPGGPEA, PCVEEEQSRGVGVPSSPVRAPPDSPTTPVRS, ERRS…APPF, QVPL…AGGG, EMES…LARL, and RLAS…PGAR. Serine 441 is subject to Phosphoserine. A compositionally biased stretch (polar residues) spans 485 to 496; it reads PSRQACSSQPAQ. Serine 541 is subject to Phosphoserine. Basic and acidic residues-rich tracts occupy residues 541 to 555 and 574 to 589; these read SKEWVIIDKETELKD and ELRPLPEEGEERRRLG. The span at 638 to 647 shows a compositional bias: low complexity; it reads SPSHSPLHSG. Positions 735-769 are enriched in acidic residues; the sequence is GEEEEEEEEEEEEEEEEEEEEEEEEEEEEEEEEEA. The span at 786–795 shows a compositional bias: basic and acidic residues; it reads GSERSTERSQ. Composition is skewed to polar residues over residues 868–885 and 1020–1035; these read PTGSQLDVSEPGTLSSIL and ASQQEPVTKKGTTISP. The span at 1097 to 1107 shows a compositional bias: low complexity; it reads RLASGASSSSS.

Belongs to the protein kinase superfamily. CK1 Ser/Thr protein kinase family. The cofactor is Mg(2+). Mn(2+) serves as cofactor. In terms of tissue distribution, expressed in the brain. Strong expression in the cortical layers, the CA1 layers of the hippocampus and the granular layer of the cerebellum. Also expressed in the large cortical pyramidal cells in the temporal cortex, the CA1 pyramidal neurons and the cerebellum granular neurons.

The protein resides in the cytoplasm. The enzyme catalyses L-seryl-[protein] + ATP = O-phospho-L-seryl-[protein] + ADP + H(+). It catalyses the reaction L-threonyl-[protein] + ATP = O-phospho-L-threonyl-[protein] + ADP + H(+). In terms of biological role, serine/threonine kinase which is able to phosphorylate TAU on serine, threonine and tyrosine residues. Induces aggregation of TAU. The chain is Tau-tubulin kinase 1 (Ttbk1) from Mus musculus (Mouse).